Consider the following 83-residue polypeptide: Antitoxin ParD1 (83 aa).

The stretch at 33–60 forms a coiled coil; that stretch reads IRSALRLLEDRETQLRALREALEAGERS. A disordered region spans residues 54–83; sequence LEAGERSGSSTPFDFDGFLGRKRADASRGR.

The protein belongs to the ParD antitoxin family.

Functionally, antitoxin component of a type II toxin-antitoxin (TA) system. This Mycobacterium tuberculosis (strain CDC 1551 / Oshkosh) protein is Antitoxin ParD1 (parD1).